Here is a 528-residue protein sequence, read N- to C-terminus: PH domain-containing protein DDB_G0267786 (528 aa).

The 122-residue stretch at 59 to 180 folds into the PH domain; the sequence is SDVFSGYLVK…WIEIFKTCCR (122 aa).

The chain is PH domain-containing protein DDB_G0267786 from Dictyostelium discoideum (Social amoeba).